A 249-amino-acid chain; its full sequence is Adapter protein MecA (249 aa).

This sequence belongs to the MecA family. Homodimer.

In terms of biological role, enables the recognition and targeting of unfolded and aggregated proteins to the ClpC protease or to other proteins involved in proteolysis. The chain is Adapter protein MecA from Streptococcus thermophilus (strain ATCC BAA-491 / LMD-9).